The primary structure comprises 320 residues: rRNA 2'-O-methyltransferase fibrillarin 2 (320 aa).

The tract at residues 1–79 is disordered; that stretch reads MRPPLTGSGG…GRGGMKGGSK (79 aa). Gly residues-rich tracts occupy residues 7–44 and 57–76; these read GSGGGFSGGRGRGGYSGGRGDGGFSGGRGGGGRGGGRG and PPRGGARGGRGPAGRGGMKG. S-adenosyl-L-methionine is bound by residues 167–168, 186–187, 211–212, and 231–234; these read TT, EF, DA, and DVAQ.

It belongs to the methyltransferase superfamily. Fibrillarin family. Component of box C/D small nucleolar ribonucleoprotein (snoRNP) particles. Interacts with groundnut rosette virus long-distance movement protein; this interaction is required for virus long-distance movement protein transiting through host Cajal body and nucleolus, relocalization of fibrillarin to the cytoplasm, and in presence of viral RNA, leads to the formation of stable RNPs. Interacts (via GAR domain) with the hordeivirus TGB1 movement protein (via the first 82 amino acid residues). Interacts with PRMT11 and PRMT12. Interacts with MED19A. In terms of processing, methylated by PRMT11 and PRMT12. As to expression, expressed in roots and flowers. Expressed in leaves and stems. Expression levels decrease during aging.

Its subcellular location is the nucleus. It localises to the nucleolus. It catalyses the reaction a ribonucleotide in rRNA + S-adenosyl-L-methionine = a 2'-O-methylribonucleotide in rRNA + S-adenosyl-L-homocysteine + H(+). It carries out the reaction L-glutaminyl-[histone H2A] + S-adenosyl-L-methionine = N(5)-methyl-L-glutaminyl-[histone H2A] + S-adenosyl-L-homocysteine + H(+). In terms of biological role, S-adenosyl-L-methionine-dependent methyltransferase that has the ability to methylate both RNAs and proteins. Involved in pre-rRNA processing. Utilizes the methyl donor S-adenosyl-L-methionine to catalyze the site-specific 2'-hydroxyl methylation of ribose moieties in pre-ribosomal RNA. Site specificity is provided by a guide RNA that base pairs with the substrate. Methylation occurs at a characteristic distance from the sequence involved in base pairing with the guide RNA. Also acts as a protein methyltransferase by mediating methylation of 'Gln-105' of histone H2A (H2AQ105me), a modification that impairs binding of the FACT complex and is specifically present at 35S ribosomal DNA locus. Acts as a negative regulator of expression of immune responsive genes, including pathogenesis-related gene 1 (PR1), and of resistance against bacterial pathogen. Binds to MED19A, a positive regulator of PR1 expression, to repress the activator activity of MED19A. In response to the bacterial pathogen-associated molecular pattern (PAMP) elf18, associates with the long non-coding RNA (lncRNA) ELENA1 (At4g16355), and releases its repression of MED19A. Possesses ribonuclease activity toward rRNA in vitro. Binds phosphoinositides, phospholipids and phosphatidic acid in vitro. This Arabidopsis thaliana (Mouse-ear cress) protein is rRNA 2'-O-methyltransferase fibrillarin 2.